A 724-amino-acid chain; its full sequence is MRKGGLTPDRDRQIEEHELQETGISPDIERLKRNINATPYQREEEEEDREEQEESVEGIFESREVPSWKKQLTIRAFVVSFALSILFSFIVMKLNLTTGIIPSLNVSAGLLGFFFVKTWTKMLHKSGLLKQPFTRQENTVIQTCVVASSGIAFSGGFGTYLFAMSHRIADQSGDVARGVKDPSLGWMIAFLFVVSFLGLFSVVPLRKIMIIDFKLPYPSGTATAHLINSFHTPQGAKLAKKQVRVLGKFFSFSFFWGFFQWFFTAGENCGFNSFPTFGLRAYQYKFYFDFSATYVGVGMICPYIINISLLLGGILSWGLMWPLIETRKGDWFPSNVDSSSMNGLQAYKVFIAVATILGDGLYNFCKVLIRTFSGLISQIRGKAGSRSSLAHKEDPPASPASPLTPRISYDDQRRTRFFLKDQIPSWFAVGGYVVISAVSTAILPHMFSQLRWYYIIVIYIFAPILAFCNAYGAGLTDWSLASTYGKLAIFTIGAWAGSDHGGLLAGLAACGVMMNIVSTASDLTQDFKTGYLTLSSPRAMFVSQVIGTAMGCLVSPCVFWLFYKAFDDLGLPNSEYPAPFATVYRSMAKLGVEGVSSLPRDCLMLCYVFFGVAILINLIKDCLGNRWGRFVPLPMAMAIPFFLGPYFAIDMCVGSFILFVWERLDAPKAEAFATAVASGLICGDGIWTLPSSVLAIAGVKPPICMKFLSAATNHRVDKFLQGSS.

The tract at residues 1–58 (MRKGGLTPDRDRQIEEHELQETGISPDIERLKRNINATPYQREEEEEDREEQEESVEG) is disordered. The span at 8-20 (PDRDRQIEEHELQ) shows a compositional bias: basic and acidic residues. Ser25 carries the phosphoserine modification. Positions 43-56 (EEEEEDREEQEESV) are enriched in acidic residues. The next 7 helical transmembrane spans lie at 72–92 (LTIR…FIVM), 96–116 (LTTG…FFFV), 144–164 (CVVA…LFAM), 184–204 (LGWM…SVVP), 245–265 (VLGK…FFTA), 304–324 (IINI…WPLI), and 349–369 (VFIA…KVLI). The segment at 386-407 (RSSLAHKEDPPASPASPLTPRI) is disordered. The next 8 membrane-spanning stretches (helical) occupy residues 423-443 (IPSW…TAIL), 455-475 (IIVI…GAGL), 478-497 (WSLA…AWAG), 501-520 (GGLL…VSTA), 541-561 (FVSQ…VFWL), 603-623 (LMLC…KDCL), 641-661 (FFLG…LFVW), and 679-699 (GLIC…IAGV).

Belongs to the YSL (TC 2.A.67.2) family.

The protein resides in the membrane. Functionally, may be involved in the transport of nicotianamine-chelated metals. This chain is Probable metal-nicotianamine transporter YSL8 (YSL8), found in Arabidopsis thaliana (Mouse-ear cress).